The sequence spans 788 residues: Bifunctional purine biosynthetic protein ADE1 (788 aa).

A GARS region spans residues 1–430 (MEPIIALLIG…DIAHHALNPK (430 aa)). Residues 115-321 (KDFMHRNNIP…LAEIILACVN (207 aa)) form the ATP-grasp domain. 141–202 (LDTCTFDVVI…EELLEGEELS (62 aa)) contributes to the ATP binding site. Residues glutamate 291 and asparagine 293 each coordinate Mg(2+). The segment at 437–769 (LTYENSGVSV…TVYRIGQLVD (333 aa)) is AIRS.

This sequence in the N-terminal section; belongs to the GARS family. It in the C-terminal section; belongs to the AIR synthase family. Requires Mg(2+) as cofactor. It depends on Mn(2+) as a cofactor.

It localises to the cytoplasm. Its subcellular location is the cytosol. The catalysed reaction is 5-phospho-beta-D-ribosylamine + glycine + ATP = N(1)-(5-phospho-beta-D-ribosyl)glycinamide + ADP + phosphate + H(+). It catalyses the reaction 2-formamido-N(1)-(5-O-phospho-beta-D-ribosyl)acetamidine + ATP = 5-amino-1-(5-phospho-beta-D-ribosyl)imidazole + ADP + phosphate + H(+). It functions in the pathway purine metabolism; IMP biosynthesis via de novo pathway; 5-amino-1-(5-phospho-D-ribosyl)imidazole from N(2)-formyl-N(1)-(5-phospho-D-ribosyl)glycinamide: step 2/2. It participates in purine metabolism; IMP biosynthesis via de novo pathway; N(1)-(5-phospho-D-ribosyl)glycinamide from 5-phospho-alpha-D-ribose 1-diphosphate: step 2/2. Catalyzes the second and fifth step in the 'de novo' purine biosynthesis pathway; contains phosphoribosylamine--glycine ligase (GARS) and phosphoribosylformylglycinamidine cyclo-ligase (AIRS) activities. This Schizosaccharomyces pombe (strain 972 / ATCC 24843) (Fission yeast) protein is Bifunctional purine biosynthetic protein ADE1.